A 517-amino-acid chain; its full sequence is 2,3-bisphosphoglycerate-independent phosphoglycerate mutase (517 aa).

Mn(2+)-binding residues include Asp14 and Ser64. The active-site Phosphoserine intermediate is the Ser64. Residues His125, 155–156 (RD), Arg187, Arg193, 259–262 (RPDR), and Lys334 contribute to the substrate site. Asp401, His405, Asp442, His443, and His461 together coordinate Mn(2+).

This sequence belongs to the BPG-independent phosphoglycerate mutase family. In terms of assembly, monomer. Mn(2+) serves as cofactor.

The enzyme catalyses (2R)-2-phosphoglycerate = (2R)-3-phosphoglycerate. Its pathway is carbohydrate degradation; glycolysis; pyruvate from D-glyceraldehyde 3-phosphate: step 3/5. In terms of biological role, catalyzes the interconversion of 2-phosphoglycerate and 3-phosphoglycerate. The polypeptide is 2,3-bisphosphoglycerate-independent phosphoglycerate mutase (Symbiobacterium thermophilum (strain DSM 24528 / JCM 14929 / IAM 14863 / T)).